A 96-amino-acid chain; its full sequence is Putative pterin-4-alpha-carbinolamine dehydratase (96 aa).

This sequence belongs to the pterin-4-alpha-carbinolamine dehydratase family.

It carries out the reaction (4aS,6R)-4a-hydroxy-L-erythro-5,6,7,8-tetrahydrobiopterin = (6R)-L-erythro-6,7-dihydrobiopterin + H2O. In Prochlorococcus marinus (strain MIT 9515), this protein is Putative pterin-4-alpha-carbinolamine dehydratase.